The following is an 87-amino-acid chain: Small ribosomal subunit protein bS20 (87 aa).

A compositionally biased stretch (basic residues) spans 1–22; the sequence is MANIKSAKKRAVQSEKRRKHNA. Residues 1–27 are disordered; sequence MANIKSAKKRAVQSEKRRKHNASSRSM.

The protein belongs to the bacterial ribosomal protein bS20 family.

In terms of biological role, binds directly to 16S ribosomal RNA. The polypeptide is Small ribosomal subunit protein bS20 (Pectobacterium atrosepticum (strain SCRI 1043 / ATCC BAA-672) (Erwinia carotovora subsp. atroseptica)).